Reading from the N-terminus, the 83-residue chain is uncharacterized protein (83 aa).

Transmembrane regions (helical) follow at residues 7-26 (FARFVEYSFFAVFAALIVSY), 36-58 (LSPLLVFLLTLIPAIGLILILPF), and 65-82 (ILTVAVLIEMAVALYLAF).

The protein localises to the cell membrane. This is an uncharacterized protein from Archaeoglobus fulgidus (strain ATCC 49558 / DSM 4304 / JCM 9628 / NBRC 100126 / VC-16).